Consider the following 631-residue polypeptide: Probable protein phosphatase 2C 31 (631 aa).

Disordered regions lie at residues 119–142 (GPLH…SDRF) and 205–231 (LSGR…PKGN). The segment covering 131-140 (ASGSASTASD) has biased composition (polar residues). A PPM-type phosphatase domain is found at 221–622 (DGDYRSTPKG…DDVSIIVMSF (402 aa)). Positions 261 and 262 each coordinate Mn(2+). Positions 324–347 (GGDDDPDAERKAKRGRIERNADDD) are disordered. Asp-550 and Asp-613 together coordinate Mn(2+).

Belongs to the PP2C family. It depends on Mg(2+) as a cofactor. Mn(2+) is required as a cofactor.

The enzyme catalyses O-phospho-L-seryl-[protein] + H2O = L-seryl-[protein] + phosphate. It catalyses the reaction O-phospho-L-threonyl-[protein] + H2O = L-threonyl-[protein] + phosphate. In Oryza sativa subsp. japonica (Rice), this protein is Probable protein phosphatase 2C 31.